The sequence spans 37 residues: Calcitonin gene-related peptide 1 (37 aa).

A disulfide bridge connects residues Cys2 and Cys7. Phe37 is subject to Phenylalanine amide.

Belongs to the calcitonin family.

It localises to the secreted. In terms of biological role, CGRP1/CALCA is a peptide hormone that induces vasodilation mediated by the CALCRL-RAMP1 receptor complex. Dilates a variety of vessels including the coronary, cerebral and systemic vasculature. Its abundance in the CNS also points toward a neurotransmitter or neuromodulator role. It also elevates platelet cAMP. CGRP1 can also bind and activate CALCR-RAMP1 (AMYR1) receptor complex. The protein is Calcitonin gene-related peptide 1 (CALCA) of Sus scrofa (Pig).